Reading from the N-terminus, the 343-residue chain is Cyclic AMP-AMP-AMP synthase (343 aa).

It belongs to the CD-NTase family. D01 subfamily. Mg(2+) is required as a cofactor.

It carries out the reaction 3 ATP = 2',3',3'-c-tri-AMP + 3 diphosphate. In terms of biological role, cyclic nucleotide synthase (second messenger synthase) of a CBASS antivirus system. CBASS (cyclic oligonucleotide-based antiphage signaling system) provides immunity against bacteriophage. The CD-NTase protein synthesizes cyclic nucleotides in response to infection; these serve as specific second messenger signals. The signals activate a diverse range of effectors, leading to bacterial cell death and thus abortive phage infection. A type II-C(AAAA) CBASS system. Its function is as follows. Cyclic trinucleotide synthase that catalyzes the synthesis of 2',3',3'-cyclic AMP-AMP-AMP (2',3',3'-c-tri-AMP or 2'3'3'-cAAA) as the major product, as well as another cyclic AMP(4) 2'-5'-linked minor product that acts as a second messenger for cell signal transduction. This is Cyclic AMP-AMP-AMP synthase from Acinetobacter sp. (strain ATCC 27244 / 9458).